Consider the following 653-residue polypeptide: 23S rRNA 5-hydroxycytidine C2501 synthase (653 aa).

This sequence belongs to the peptidase U32 family. In terms of assembly, interacts with precursors of the 50S ribosomal subunit.

Its activity is regulated as follows. Iron-sulfur clusters and prephenate are required for ho5C2501 formation. Responsible for the formation of the 5-hydroxycytidine modification at the C2501 position (ho5C2501) of 23S rRNA. May be a Fe-S protein that catalyzes ho5C2501 formation using prephenate as a hydroxyl group donor. The protein is 23S rRNA 5-hydroxycytidine C2501 synthase of Escherichia coli (strain K12).